Consider the following 65-residue polypeptide: Large ribosomal subunit protein bL35 (65 aa).

Over residues 1–43 the composition is skewed to basic residues; sequence MPKMKTRRGAAKRFAKTGSGKFKRRKQGLRHILTKKTAKRKSR. The segment at 1 to 49 is disordered; sequence MPKMKTRRGAAKRFAKTGSGKFKRRKQGLRHILTKKTAKRKSRLGQSAT.

The protein belongs to the bacterial ribosomal protein bL35 family.

This is Large ribosomal subunit protein bL35 from Maridesulfovibrio salexigens (strain ATCC 14822 / DSM 2638 / NCIMB 8403 / VKM B-1763) (Desulfovibrio salexigens).